The following is a 129-amino-acid chain: Small ribosomal subunit protein uS12 (129 aa).

The segment at methionine 1 to glutamate 25 is disordered. A compositionally biased stretch (basic residues) spans phenylalanine 10–lysine 20. Aspartate 89 bears the 3-methylthioaspartic acid mark. A disordered region spans residues arginine 110 to lysine 129.

The protein belongs to the universal ribosomal protein uS12 family. As to quaternary structure, part of the 30S ribosomal subunit. Contacts proteins S8 and S17. May interact with IF1 in the 30S initiation complex.

In terms of biological role, with S4 and S5 plays an important role in translational accuracy. Functionally, interacts with and stabilizes bases of the 16S rRNA that are involved in tRNA selection in the A site and with the mRNA backbone. Located at the interface of the 30S and 50S subunits, it traverses the body of the 30S subunit contacting proteins on the other side and probably holding the rRNA structure together. The combined cluster of proteins S8, S12 and S17 appears to hold together the shoulder and platform of the 30S subunit. This chain is Small ribosomal subunit protein uS12, found in Rickettsia canadensis (strain McKiel).